The following is a 569-amino-acid chain: Matrix metalloproteinase-21 (569 aa).

An N-terminal signal peptide occupies residues 1-24 (MLAASIFRPTLLLCWLAAPWPTQP). A propeptide spanning residues 25–144 (ESLFHSRDRS…GPPPRARSRR (120 aa)) is cleaved from the precursor. Positions 115-122 (PRCGVPDM) match the Cysteine switch motif. The interval 115-166 (PRCGVPDMRPPPPSAPPSPPGPPPRARSRRSPRAPLSLSRRGWQPRGYPDGG) is disordered. Zn(2+) is bound at residue Cys117. Pro residues predominate over residues 122 to 139 (MRPPPPSAPPSPPGPPPR). The span at 147 to 156 (RAPLSLSRRG) shows a compositional bias: low complexity. His283 contributes to the Zn(2+) binding site. Residue Glu284 is part of the active site. 2 residues coordinate Zn(2+): His287 and His293. The cysteines at positions 329 and 560 are disulfide-linked. Hemopexin repeat units lie at residues 330-389 (EGSF…WPGI), 391-447 (THNI…FPGI), 448-496 (PSPL…FPAV), and 503-559 (FRNI…WFDV). Residue Asn372 is glycosylated (N-linked (GlcNAc...) asparagine).

This sequence belongs to the peptidase M10A family. It depends on Zn(2+) as a cofactor. The cofactor is Ca(2+). In terms of processing, the precursor is cleaved by a furin endopeptidase. In terms of tissue distribution, identified in fetal brain, kidney and liver. In adult tissues found primarily in ovary, kidney, liver, lung, placenta, brain and peripheral blood leukocytes. Expressed as well in various cancer cell lines.

It localises to the secreted. Functionally, plays a specialized role in the generation of left-right asymmetry during embryogenesis. May act as a negative regulator of the NOTCH-signaling pathway. Cleaves alpha-1-antitrypsin. This chain is Matrix metalloproteinase-21 (MMP21), found in Homo sapiens (Human).